Reading from the N-terminus, the 390-residue chain is Protein NDRG4-A (390 aa).

Residues 356–390 are disordered; the sequence is LTSASSVDGSRPRPCTQSESSDGIGQINHTMEVSC. A compositionally biased stretch (polar residues) spans 370 to 390; that stretch reads CTQSESSDGIGQINHTMEVSC.

This sequence belongs to the NDRG family.

It localises to the cytoplasm. It is found in the cytosol. In terms of biological role, contributes to the maintenance of intracerebral BDNF levels within the normal range. May enhance growth factor-induced ERK1 and ERK2 phosphorylation. May attenuate growth factor-promoted ELK1 phosphorylation in a microtubule-dependent manner. This Xenopus laevis (African clawed frog) protein is Protein NDRG4-A (ndrg4-a).